A 529-amino-acid chain; its full sequence is Peptide chain release factor 3 (529 aa).

The tr-type G domain occupies 11-280; the sequence is SKRRTFAIIS…GLTEWAPAPK (270 aa). Residues 20–27, 88–92, and 142–145 each bind GTP; these read SHPDAGKT, DTPGH, and NKLD.

This sequence belongs to the TRAFAC class translation factor GTPase superfamily. Classic translation factor GTPase family. PrfC subfamily.

It is found in the cytoplasm. Increases the formation of ribosomal termination complexes and stimulates activities of RF-1 and RF-2. It binds guanine nucleotides and has strong preference for UGA stop codons. It may interact directly with the ribosome. The stimulation of RF-1 and RF-2 is significantly reduced by GTP and GDP, but not by GMP. The protein is Peptide chain release factor 3 of Vibrio parahaemolyticus serotype O3:K6 (strain RIMD 2210633).